A 135-amino-acid chain; its full sequence is MTKIVRFGVSVEEDLLENFDKIIENKGYNSRSEAIRDLMRDYIIKEKWNIKSEKVAGSISLIYEHDVYGLSEKLTDIQHHYHDVIISTLHVHLDEKNCMEVILVRGKVEKIKKLYNEISSLKWVRHTNISITDII.

Positions 79, 90, 92, and 98 each coordinate Ni(2+).

The protein belongs to the transcriptional regulatory CopG/NikR family. It depends on Ni(2+) as a cofactor.

Functionally, transcriptional regulator. The polypeptide is Putative nickel-responsive regulator (Dictyoglomus thermophilum (strain ATCC 35947 / DSM 3960 / H-6-12)).